Reading from the N-terminus, the 138-residue chain is Phospholipase A2 homolog 1 (138 aa).

The signal sequence occupies residues 1–16 (MRTLWIMAVLLVGVEG). Cystine bridges form between Cys42/Cys132, Cys44/Cys60, Cys59/Cys111, Cys65/Cys138, Cys66/Cys104, Cys73/Cys97, and Cys91/Cys102. The tract at residues 121–134 (KKYKNNYLKPFCKK) is important for membrane-damaging activities in eukaryotes and bacteria; heparin-binding.

The protein belongs to the phospholipase A2 family. Group II subfamily. K49 sub-subfamily. In terms of assembly, homodimer; non-covalently linked (probable alternative/compact dimer conformation in solution). In terms of tissue distribution, expressed by the venom gland.

The protein localises to the secreted. In terms of biological role, snake venom phospholipase A2 homolog that lacks enzymatic and anticoagulant activities. In mice, it induces conspicuous local myonecrosis, edema, and a systemic interleukin-6 response. In vitro, it is cytolytic upon myoblasts, and weakly bactericidal. A model of myotoxic mechanism has been proposed: an apo Lys49-PLA2 is activated by the entrance of a hydrophobic molecule (e.g. fatty acid) at the hydrophobic channel of the protein leading to a reorientation of a monomer. This reorientation causes a transition between 'inactive' to 'active' states, causing alignment of C-terminal and membrane-docking sites (MDoS) side-by-side and putting the membrane-disruption sites (MDiS) in the same plane, exposed to solvent and in a symmetric position for both monomers. The MDoS region stabilizes the toxin on membrane by the interaction of charged residues with phospholipid head groups. Subsequently, the MDiS region destabilizes the membrane with penetration of hydrophobic residues. This insertion causes a disorganization of the membrane, allowing an uncontrolled influx of ions (i.e. calcium and sodium), and eventually triggering irreversible intracellular alterations and cell death. The sequence is that of Phospholipase A2 homolog 1 from Bothrops atrox (Barba amarilla).